Consider the following 963-residue polypeptide: Ras-interacting protein 1 (963 aa).

Basic and acidic residues predominate over residues 1 to 10; that stretch reads MLSGERKEGG. 2 disordered regions span residues 1 to 22 and 35 to 118; these read MLSGERKEGGSPRFGKLHLPVG and LGRR…AQRW. The span at 41-57 shows a compositional bias: low complexity; it reads SAASVKSSSSDTGSRSS. Arg94 carries the post-translational modification Omega-N-methylarginine. The span at 96 to 113 shows a compositional bias: gly residues; it reads SGTGTTGSSGAGGPGTPG. The Ras-associating domain maps to 144-259; it reads PPGVLKIFGA…RRFELRGREE (116 aa). Phosphoserine is present on residues Ser188, Ser280, and Ser292. The disordered stretch occupies residues 267 to 356; it reads AFGAADSEGT…LSMAPGAADA (90 aa). Positions 290–301 are enriched in low complexity; the sequence is AASGGAALASPG. Residues 302 to 313 show a composition bias toward gly residues; the sequence is PGTGSGAPAGSG. Low complexity predominate over residues 320 to 333; the sequence is NLSLRRSVSELSLQ. Phosphoserine occurs at positions 326, 328, 331, and 419. One can recognise a Dilute domain in the interval 600–897; sequence GRLARLIKEA…PPAEREAVDT (298 aa).

Interacts with Ras family members that have been activated by GTP binding. Interacts with HRAS, RAP1A, RAP2, RRAS, RAF1 and RRAS2. Interacts with MYH9 and ARHGAP29. Highly expressed in heart. Detected at lower levels in placenta and pancreas.

Its subcellular location is the cytoplasm. It localises to the perinuclear region. The protein resides in the golgi apparatus. It is found in the golgi stack. Required for the proper formation of vascular structures that develop via both vasculogenesis and angiogenesis. Acts as a critical and vascular-specific regulator of GTPase signaling, cell architecture, and adhesion, which is essential for endothelial cell morphogenesis and blood vessel tubulogenesis. Regulates the activity of Rho GTPases in part by recruiting ARHGAP29 and suppressing RhoA signaling and dampening ROCK and MYH9 activities in endothelial cells. May act as effector for Golgi-bound HRAS and other Ras-like proteins. May promote HRAS-mediated transformation. Negative regulator of amino acid starvation-induced autophagy. This Homo sapiens (Human) protein is Ras-interacting protein 1 (RASIP1).